We begin with the raw amino-acid sequence, 89 residues long: Small ribosomal subunit protein uS17 (89 aa).

This sequence belongs to the universal ribosomal protein uS17 family. In terms of assembly, part of the 30S ribosomal subunit.

Its function is as follows. One of the primary rRNA binding proteins, it binds specifically to the 5'-end of 16S ribosomal RNA. The sequence is that of Small ribosomal subunit protein uS17 from Chlorobium phaeobacteroides (strain BS1).